Reading from the N-terminus, the 344-residue chain is GTP 3',8-cyclase (344 aa).

A Radical SAM core domain is found at 19 to 245; sequence PFGRAVTYLR…DIPYRTGGPA (227 aa). Residue R28 participates in GTP binding. The [4Fe-4S] cluster site is built by C35 and C39. Position 41 (Y41) interacts with S-adenosyl-L-methionine. Residue C42 coordinates [4Fe-4S] cluster. R77 lines the GTP pocket. Position 81 (G81) interacts with S-adenosyl-L-methionine. T111 is a binding site for GTP. Residue S135 coordinates S-adenosyl-L-methionine. K171 is a GTP binding site. Position 205 (M205) interacts with S-adenosyl-L-methionine. Positions 268 and 271 each coordinate [4Fe-4S] cluster. 273-275 lines the GTP pocket; sequence RVR. C285 provides a ligand contact to [4Fe-4S] cluster.

Belongs to the radical SAM superfamily. MoaA family. As to quaternary structure, monomer and homodimer. [4Fe-4S] cluster is required as a cofactor.

It catalyses the reaction GTP + AH2 + S-adenosyl-L-methionine = (8S)-3',8-cyclo-7,8-dihydroguanosine 5'-triphosphate + 5'-deoxyadenosine + L-methionine + A + H(+). Its pathway is cofactor biosynthesis; molybdopterin biosynthesis. Functionally, catalyzes the cyclization of GTP to (8S)-3',8-cyclo-7,8-dihydroguanosine 5'-triphosphate. This chain is GTP 3',8-cyclase, found in Brucella abortus (strain S19).